The sequence spans 184 residues: Oligoribonuclease (184 aa).

Residues 8–169 (LIWIDLEMTG…EDIHESIIEL (162 aa)) enclose the Exonuclease domain. Tyrosine 129 is an active-site residue.

This sequence belongs to the oligoribonuclease family.

The protein localises to the cytoplasm. In terms of biological role, 3'-to-5' exoribonuclease specific for small oligoribonucleotides. The chain is Oligoribonuclease from Buchnera aphidicola subsp. Schizaphis graminum (strain Sg).